The sequence spans 475 residues: Ribulose bisphosphate carboxylase large chain (475 aa).

A propeptide spanning residues 1 to 2 (MS) is cleaved from the precursor. Pro3 carries the post-translational modification N-acetylproline. The residue at position 14 (Lys14) is an N6,N6,N6-trimethyllysine. Residues Asn123 and Thr173 each coordinate substrate. Lys175 (proton acceptor) is an active-site residue. Lys177 is a binding site for substrate. Mg(2+) contacts are provided by Lys201, Asp203, and Glu204. Lys201 carries the N6-carboxylysine modification. His294 serves as the catalytic Proton acceptor. Substrate is bound by residues Arg295, His327, and Ser379.

The protein belongs to the RuBisCO large chain family. Type I subfamily. In terms of assembly, heterohexadecamer of 8 large chains and 8 small chains; disulfide-linked. The disulfide link is formed within the large subunit homodimers. Requires Mg(2+) as cofactor. Post-translationally, the disulfide bond which can form in the large chain dimeric partners within the hexadecamer appears to be associated with oxidative stress and protein turnover.

The protein localises to the plastid. It is found in the chloroplast. The enzyme catalyses 2 (2R)-3-phosphoglycerate + 2 H(+) = D-ribulose 1,5-bisphosphate + CO2 + H2O. It catalyses the reaction D-ribulose 1,5-bisphosphate + O2 = 2-phosphoglycolate + (2R)-3-phosphoglycerate + 2 H(+). Its function is as follows. RuBisCO catalyzes two reactions: the carboxylation of D-ribulose 1,5-bisphosphate, the primary event in carbon dioxide fixation, as well as the oxidative fragmentation of the pentose substrate in the photorespiration process. Both reactions occur simultaneously and in competition at the same active site. This Cryptomeria japonica (Japanese cedar) protein is Ribulose bisphosphate carboxylase large chain.